The sequence spans 549 residues: Protein wntless homolog (549 aa).

The first 34 residues, 1–34 (MAGGAVIENLSNRKLFVIFAGLLVIQIMFFLIGA), serve as a signal peptide directing secretion. Residues 36–236 (YAPSPSSYME…RLIEIHQNGG (201 aa)) are Lumenal-facing. Residues 237-257 (FTLVWLWTKTFMTPVVAICLW) traverse the membrane as a helical segment. At 258–275 (WYYNRINQLARNPLLLER) the chain is on the cytoplasmic side. The helical transmembrane segment at 276 to 296 (AILLLGLSLVILDFPIEWISL) threads the bilayer. Over 297–310 (TYRIPFLLLISDLR) the chain is Lumenal. Residues 311–331 (QGLFYTVLFSFWLIFAGEHLI) form a helical membrane-spanning segment. The Cytoplasmic segment spans residues 332-345 (DDNTRNNLKSYRFN). Residues 346–366 (LSFIITASLGLLIYDLIERGI) traverse the membrane as a helical segment. At 367–383 (QLYDPFYSVWSSPTGSQ) the chain is on the lumenal side. Residues 384–404 (IAYFAIFISAISTVAYFIFLF) form a helical membrane-spanning segment. Topologically, residues 405–439 (FKIARVWSTIKSKRSAQIYQTSENRRLKVEGVIYR) are cytoplasmic. The helical transmembrane segment at 440–460 (FKFLMLFTLLCSAFTIAAYFM) threads the bilayer. Topologically, residues 461 to 483 (KQYGEAQLHGDEARDGFLTGSTS) are lumenal. Residues 484–504 (AFFTGAFGMCNIYVLLLLAMY) form a helical membrane-spanning segment. At 505–549 (APSHKHYRGASQLIDENDDDEIMEDPSNQHTESNAMTTFLKPSTD) the chain is on the cytoplasmic side. Positions 524–549 (DEIMEDPSNQHTESNAMTTFLKPSTD) are disordered. Residues 530-549 (PSNQHTESNAMTTFLKPSTD) show a composition bias toward polar residues.

Belongs to the wntless family. Expressed in the tail hypodermis, stomatointestinal muscle, the mesoblast cell M and its descendants, CAN neurons, the developing vulva, the pharynx and the pharyngeal intestinal valve.

The protein resides in the cell membrane. Its subcellular location is the early endosome membrane. It localises to the golgi apparatus membrane. The protein localises to the basal cell membrane. It is found in the late endosome membrane. In terms of biological role, probable sorting receptor which regulates endocytosis and secretion of the wnt ligand egl-20. Recycling of mig-14 from the plasma membrane to the Golgi apparatus by the retromer complex is essential for its function. Its endosomal trafficking is regulated by its association with sorting nexin snx-3 on early endosomes and the mtm-6/mtm-9 myotubularin complex. Required in embryonic development for endoderm specification and the correct positioning and orientation of the mitotic spindles and division planes in blastomere cells. Functions during vulval development, playing a role in vulval precursor cell fate specification. During development, specifically regulates the migration of HSN neurons, the left Q neuroblast (QL) and its descendants and the distal tip cells of the gonads. Positioning of Q neuroblasts may be both dependent and independent of hox gene mab-5. Involved in establishing ALM and PLM neuronal cell polarity. The chain is Protein wntless homolog from Caenorhabditis elegans.